We begin with the raw amino-acid sequence, 321 residues long: Tetraacyldisaccharide 4'-kinase (321 aa).

54 to 61 serves as a coordination point for ATP; it reads SVGGTGKT.

Belongs to the LpxK family.

It carries out the reaction a lipid A disaccharide + ATP = a lipid IVA + ADP + H(+). It participates in glycolipid biosynthesis; lipid IV(A) biosynthesis; lipid IV(A) from (3R)-3-hydroxytetradecanoyl-[acyl-carrier-protein] and UDP-N-acetyl-alpha-D-glucosamine: step 6/6. Transfers the gamma-phosphate of ATP to the 4'-position of a tetraacyldisaccharide 1-phosphate intermediate (termed DS-1-P) to form tetraacyldisaccharide 1,4'-bis-phosphate (lipid IVA). The sequence is that of Tetraacyldisaccharide 4'-kinase from Rickettsia conorii (strain ATCC VR-613 / Malish 7).